The following is a 508-amino-acid chain: GMP synthase [glutamine-hydrolyzing] (508 aa).

In terms of domain architecture, Glutamine amidotransferase type-1 spans 1 to 189 (MIVVLDFGSQ…ALLVCGCEKT (189 aa)). The active-site Nucleophile is the C78. Active-site residues include H163 and E165. The 194-residue stretch at 190–383 (WGMQNFAQKE…LGVSQDFLMR (194 aa)) folds into the GMPS ATP-PPase domain. 217–223 (SGGVDST) contributes to the ATP binding site.

Homodimer.

The enzyme catalyses XMP + L-glutamine + ATP + H2O = GMP + L-glutamate + AMP + diphosphate + 2 H(+). It participates in purine metabolism; GMP biosynthesis; GMP from XMP (L-Gln route): step 1/1. In terms of biological role, catalyzes the synthesis of GMP from XMP. This is GMP synthase [glutamine-hydrolyzing] from Helicobacter acinonychis (strain Sheeba).